The primary structure comprises 74 residues: Exodeoxyribonuclease 7 small subunit (74 aa).

This sequence belongs to the XseB family. As to quaternary structure, heterooligomer composed of large and small subunits.

It is found in the cytoplasm. It carries out the reaction Exonucleolytic cleavage in either 5'- to 3'- or 3'- to 5'-direction to yield nucleoside 5'-phosphates.. Its function is as follows. Bidirectionally degrades single-stranded DNA into large acid-insoluble oligonucleotides, which are then degraded further into small acid-soluble oligonucleotides. The polypeptide is Exodeoxyribonuclease 7 small subunit (Synechococcus elongatus (strain ATCC 33912 / PCC 7942 / FACHB-805) (Anacystis nidulans R2)).